A 367-amino-acid polypeptide reads, in one-letter code: Carbamoyl phosphate synthase small chain (367 aa).

Positions 1–182 (MKLENKKGYL…PIFHPNTGDM (182 aa)) are CPSase. 3 residues coordinate L-glutamine: Ser50, Gly230, and Gly232. Residues 182-367 (MIVVVDCGIK…DKFRTMVTGK (186 aa)) form the Glutamine amidotransferase type-1 domain. Cys258 functions as the Nucleophile in the catalytic mechanism. 5 residues coordinate L-glutamine: Leu259, Gln262, Asn300, Gly302, and Tyr303. Residues His343 and Glu345 contribute to the active site.

It belongs to the CarA family. In terms of assembly, composed of two chains; the small (or glutamine) chain promotes the hydrolysis of glutamine to ammonia, which is used by the large (or ammonia) chain to synthesize carbamoyl phosphate. Tetramer of heterodimers (alpha,beta)4.

It carries out the reaction hydrogencarbonate + L-glutamine + 2 ATP + H2O = carbamoyl phosphate + L-glutamate + 2 ADP + phosphate + 2 H(+). The catalysed reaction is L-glutamine + H2O = L-glutamate + NH4(+). It functions in the pathway amino-acid biosynthesis; L-arginine biosynthesis; carbamoyl phosphate from bicarbonate: step 1/1. The protein operates within pyrimidine metabolism; UMP biosynthesis via de novo pathway; (S)-dihydroorotate from bicarbonate: step 1/3. Small subunit of the glutamine-dependent carbamoyl phosphate synthetase (CPSase). CPSase catalyzes the formation of carbamoyl phosphate from the ammonia moiety of glutamine, carbonate, and phosphate donated by ATP, constituting the first step of 2 biosynthetic pathways, one leading to arginine and/or urea and the other to pyrimidine nucleotides. The small subunit (glutamine amidotransferase) binds and cleaves glutamine to supply the large subunit with the substrate ammonia. This Saccharolobus solfataricus (strain ATCC 35092 / DSM 1617 / JCM 11322 / P2) (Sulfolobus solfataricus) protein is Carbamoyl phosphate synthase small chain.